A 291-amino-acid polypeptide reads, in one-letter code: NAD kinase (291 aa).

Residue Asp-55 is the Proton acceptor of the active site. Residues 55–56 (DG), Arg-60, 130–131 (NE), Asp-160, and 171–176 (TAYAFS) each bind NAD(+).

Belongs to the NAD kinase family. Requires a divalent metal cation as cofactor.

The protein resides in the cytoplasm. It catalyses the reaction NAD(+) + ATP = ADP + NADP(+) + H(+). Functionally, involved in the regulation of the intracellular balance of NAD and NADP, and is a key enzyme in the biosynthesis of NADP. Catalyzes specifically the phosphorylation on 2'-hydroxyl of the adenosine moiety of NAD to yield NADP. The sequence is that of NAD kinase from Corynebacterium glutamicum (strain ATCC 13032 / DSM 20300 / JCM 1318 / BCRC 11384 / CCUG 27702 / LMG 3730 / NBRC 12168 / NCIMB 10025 / NRRL B-2784 / 534).